The primary structure comprises 577 residues: Arginine--tRNA ligase (577 aa).

A 'HIGH' region motif is present at residues 122 to 132 (PNVAKEMHVGH).

The protein belongs to the class-I aminoacyl-tRNA synthetase family. Monomer.

It is found in the cytoplasm. It catalyses the reaction tRNA(Arg) + L-arginine + ATP = L-arginyl-tRNA(Arg) + AMP + diphosphate. This Histophilus somni (strain 2336) (Haemophilus somnus) protein is Arginine--tRNA ligase.